Reading from the N-terminus, the 660-residue chain is tRNA 5-methylaminomethyl-2-thiouridine biosynthesis bifunctional protein MnmC (660 aa).

Residues 1 to 233 are tRNA (mnm(5)s(2)U34)-methyltransferase; it reads MTHSHAQLVW…KRHISHGWIA (233 aa). Positions 260 to 660 are FAD-dependent cmnm(5)s(2)U34 oxidoreductase; sequence VGGGLAGAAS…IRRKLDPDAL (401 aa).

The protein in the N-terminal section; belongs to the methyltransferase superfamily. tRNA (mnm(5)s(2)U34)-methyltransferase family. This sequence in the C-terminal section; belongs to the DAO family. FAD is required as a cofactor.

It localises to the cytoplasm. The catalysed reaction is 5-aminomethyl-2-thiouridine(34) in tRNA + S-adenosyl-L-methionine = 5-methylaminomethyl-2-thiouridine(34) in tRNA + S-adenosyl-L-homocysteine + H(+). Its function is as follows. Catalyzes the last two steps in the biosynthesis of 5-methylaminomethyl-2-thiouridine (mnm(5)s(2)U) at the wobble position (U34) in tRNA. Catalyzes the FAD-dependent demodification of cmnm(5)s(2)U34 to nm(5)s(2)U34, followed by the transfer of a methyl group from S-adenosyl-L-methionine to nm(5)s(2)U34, to form mnm(5)s(2)U34. This chain is tRNA 5-methylaminomethyl-2-thiouridine biosynthesis bifunctional protein MnmC, found in Chromobacterium violaceum (strain ATCC 12472 / DSM 30191 / JCM 1249 / CCUG 213 / NBRC 12614 / NCIMB 9131 / NCTC 9757 / MK).